Consider the following 372-residue polypeptide: Zinc finger protein dpff-1 (372 aa).

The tract at residues 108–204 is disordered; sequence VGPTTESVSD…SRSIVKETKY (97 aa). Polar residues predominate over residues 109-131; sequence GPTTESVSDSSNDSTTIRPSRQT. The span at 132–141 shows a compositional bias: basic and acidic residues; that stretch reads QIKEEYRDDY. Acidic residues predominate over residues 142 to 158; it reads VLDDELSPDEFGSDEDD. Over residues 184–196 the composition is skewed to polar residues; that stretch reads TTRSSVSRLTPSR. Residues 212-235 form a C2H2-type zinc finger; the sequence is YPCDKCSAKYKSLAGLSYHQSYLH. 2 consecutive PHD-type zinc fingers follow at residues 256 to 314 and 316 to 361; these read SCDF…CKSC and ICGT…CQVE.

It belongs to the requiem/DPF family.

The protein localises to the nucleus. The protein resides in the cytoplasm. Probable transcription factor, involved in meiosis and stress protection. This Caenorhabditis elegans protein is Zinc finger protein dpff-1.